A 444-amino-acid chain; its full sequence is Shufflon protein B' (444 aa).

Positions Met1–Gly361 are constant region. The variable region stretch occupies residues Thr362–Gln444.

The chain is Shufflon protein B' from Escherichia coli.